A 467-amino-acid polypeptide reads, in one-letter code: Pachytene checkpoint protein 2 homolog (467 aa).

Position 209–216 (209–216 (GPPGTGKT)) interacts with ATP.

Belongs to the AAA ATPase family. PCH2 subfamily.

The protein resides in the chromosome. Its function is as follows. Plays a key role in chromosome recombination during meiosis. Mediates meiotic chromosome remodeling and crossover maturation. The sequence is that of Pachytene checkpoint protein 2 homolog from Arabidopsis thaliana (Mouse-ear cress).